Consider the following 286-residue polypeptide: ATP synthase gamma chain (286 aa).

This sequence belongs to the ATPase gamma chain family. As to quaternary structure, F-type ATPases have 2 components, CF(1) - the catalytic core - and CF(0) - the membrane proton channel. CF(1) has five subunits: alpha(3), beta(3), gamma(1), delta(1), epsilon(1). CF(0) has three main subunits: a, b and c.

It localises to the cell inner membrane. Functionally, produces ATP from ADP in the presence of a proton gradient across the membrane. The gamma chain is believed to be important in regulating ATPase activity and the flow of protons through the CF(0) complex. This Pseudomonas fluorescens (strain ATCC BAA-477 / NRRL B-23932 / Pf-5) protein is ATP synthase gamma chain.